The sequence spans 814 residues: Rho GTPase-activating protein 26 (814 aa).

A BAR domain is found at 7 to 262 (EFSDCCLDSP…MKENPLEHKT (256 aa)). In terms of domain architecture, PH spans 265–369 (PYTMEGYLYV…WMEAMDGREP (105 aa)). In terms of domain architecture, Rho-GAP spans 383–568 (AQLDSIGFSI…ILIENHEKIF (186 aa)). Residues 624–648 (LESVSSNPNSILNSSSSLQPNMNSS) are compositionally biased toward low complexity. The segment at 624–696 (LESVSSNPNS…MPTSSTSSDS (73 aa)) is disordered. Over residues 662–672 (SLPPNPSPTSP) the composition is skewed to pro residues. Ser668 carries the post-translational modification Phosphoserine. Residue Thr670 is modified to Phosphothreonine. At Ser671 the chain carries Phosphoserine. Residues 673–696 (LSPSWPMFSAPSSPMPTSSTSSDS) are compositionally biased toward low complexity. The SH3 domain occupies 756 to 814 (TPFRKAKALYACKAEHDSELSFTAGTVFDNVHPSQEPGWLEGTLNGKTGLIPENYVEFL).

As to quaternary structure, interacts with NYAP1, NYAP2 and MYO16. Interacts with MICAL1 and WDR44. Binds to the C-terminus of PTK2/FAK1. (Microbial infection) Interacts with human parainfluenza virus type 2 proteins P and V. Post-translationally, phosphorylated in a PINK1-dependent fashion promoting retrograde mitochondrial trafficking and clustering.

It is found in the endosome membrane. Its subcellular location is the cytoplasm. The protein resides in the cell junction. The protein localises to the focal adhesion. It localises to the cytoskeleton. GTPase-activating protein for RHOA and CDC42. Facilitates mitochondrial quality control by promoting Parkin-mediated recruitment of autophagosomes to damaged mitochondria. Negatively regulates the growth of human parainfluenza virus type 2 by inhibiting hPIV-2-mediated RHOA activation via interaction with two of its viral proteins P and V. Functionally, associates with MICAL1 on the endosomal membrane to promote Rab8-Rab10-dependent tubule extension. After dissociation of MICAL1, recruits WDR44 which connects the endoplasmic reticulum (ER) with the endosomal tubule, thereby participating in the export of a subset of neosynthesized proteins. The protein is Rho GTPase-activating protein 26 (ARHGAP26) of Homo sapiens (Human).